A 761-amino-acid chain; its full sequence is uncharacterized protein (761 aa).

TPR repeat units lie at residues 35–68, 69–102, 103–136, 137–170, 172–203, 204–237, 351–384, and 419–452; these read EEGK…SLNS, AQGL…SDVD, DALY…NPNK, VEIL…KPDF, EAEE…KNPN, EEVY…FPHD, LGVL…NPSA, and ASAG…VKEE. The segment at 487–761 is protein sulfotransferase-like; the sequence is KRPIFVLGMP…PKGLVGYTVG (275 aa).

In the C-terminal section; belongs to the protein sulfotransferase family.

This is an uncharacterized protein from Aquifex aeolicus (strain VF5).